Consider the following 231-residue polypeptide: MMEKNTMLFSLKDVGKEYQGPAEKIIIFSRLNLDIAQGDSVAVVGASGSGKSTLLHLLGTLDNPSRGTVLFRGRDITAMTAEQKAAMRSRDVGFVFQFHHLLPEFNTQENVAMQAVIAGMPRREAMKKAAHALELVGMSGRAGHRVGTLSGGERQRAAIARAILMHPAVLLADEPTGNLDERTGDSVGQLLMDLNRELGMTLVVVTHNNSLASLMNRRLELRAGELYDQNC.

In terms of domain architecture, ABC transporter spans 9–230; it reads FSLKDVGKEY…LRAGELYDQN (222 aa). 45 to 52 provides a ligand contact to ATP; it reads GASGSGKS.

Belongs to the ABC transporter superfamily. Lipoprotein translocase (TC 3.A.1.125) family. The complex is composed of two ATP-binding proteins (LolD) and two transmembrane proteins (LolC and LolE).

Its subcellular location is the cell inner membrane. Functionally, part of the ABC transporter complex LolCDE involved in the translocation of mature outer membrane-directed lipoproteins, from the inner membrane to the periplasmic chaperone, LolA. Responsible for the formation of the LolA-lipoprotein complex in an ATP-dependent manner. This Oleidesulfovibrio alaskensis (strain ATCC BAA-1058 / DSM 17464 / G20) (Desulfovibrio alaskensis) protein is Lipoprotein-releasing system ATP-binding protein LolD.